The chain runs to 184 residues: ATP synthase subunit b, chloroplastic (184 aa).

The chain crosses the membrane as a helical span at residues L27–L49.

This sequence belongs to the ATPase B chain family. In terms of assembly, F-type ATPases have 2 components, F(1) - the catalytic core - and F(0) - the membrane proton channel. F(1) has five subunits: alpha(3), beta(3), gamma(1), delta(1), epsilon(1). F(0) has four main subunits: a(1), b(1), b'(1) and c(10-14). The alpha and beta chains form an alternating ring which encloses part of the gamma chain. F(1) is attached to F(0) by a central stalk formed by the gamma and epsilon chains, while a peripheral stalk is formed by the delta, b and b' chains.

The protein resides in the plastid. It localises to the chloroplast thylakoid membrane. Its function is as follows. F(1)F(0) ATP synthase produces ATP from ADP in the presence of a proton or sodium gradient. F-type ATPases consist of two structural domains, F(1) containing the extramembraneous catalytic core and F(0) containing the membrane proton channel, linked together by a central stalk and a peripheral stalk. During catalysis, ATP synthesis in the catalytic domain of F(1) is coupled via a rotary mechanism of the central stalk subunits to proton translocation. Component of the F(0) channel, it forms part of the peripheral stalk, linking F(1) to F(0). The sequence is that of ATP synthase subunit b, chloroplastic from Cuscuta exaltata (Tall dodder).